A 199-amino-acid polypeptide reads, in one-letter code: Recombination protein RecR (199 aa).

Residues 57-72 form a C4-type zinc finger; the sequence is CQSCRTYTEESLCPIC. The Toprim domain maps to 81 to 176; sequence STICVVETPA…VISRIAHGVP (96 aa).

It belongs to the RecR family.

In terms of biological role, may play a role in DNA repair. It seems to be involved in an RecBC-independent recombinational process of DNA repair. It may act with RecF and RecO. In Shewanella sp. (strain MR-4), this protein is Recombination protein RecR.